Here is a 243-residue protein sequence, read N- to C-terminus: Exosome complex component Rrp41 (243 aa).

The protein belongs to the RNase PH family. Rrp41 subfamily. As to quaternary structure, component of the archaeal exosome complex. Forms a hexameric ring-like arrangement composed of 3 Rrp41-Rrp42 heterodimers. The hexameric ring associates with a trimer of Rrp4 and/or Csl4 subunits.

The protein resides in the cytoplasm. Functionally, catalytic component of the exosome, which is a complex involved in RNA degradation. Has 3'-&gt;5' exoribonuclease activity. Can also synthesize heteromeric RNA-tails. The chain is Exosome complex component Rrp41 from Sulfurisphaera tokodaii (strain DSM 16993 / JCM 10545 / NBRC 100140 / 7) (Sulfolobus tokodaii).